The sequence spans 163 residues: Putative 4-hydroxy-4-methyl-2-oxoglutarate aldolase (163 aa).

Substrate-binding positions include 75-78 (GDQL) and arginine 97. Aspartate 98 is a binding site for a divalent metal cation.

It belongs to the class II aldolase/RraA-like family. As to quaternary structure, homotrimer. A divalent metal cation is required as a cofactor.

The enzyme catalyses 4-hydroxy-4-methyl-2-oxoglutarate = 2 pyruvate. The catalysed reaction is oxaloacetate + H(+) = pyruvate + CO2. Functionally, catalyzes the aldol cleavage of 4-hydroxy-4-methyl-2-oxoglutarate (HMG) into 2 molecules of pyruvate. Also contains a secondary oxaloacetate (OAA) decarboxylase activity due to the common pyruvate enolate transition state formed following C-C bond cleavage in the retro-aldol and decarboxylation reactions. The sequence is that of Putative 4-hydroxy-4-methyl-2-oxoglutarate aldolase from Photobacterium profundum (strain SS9).